Reading from the N-terminus, the 162-residue chain is Protein lon-8 (162 aa).

An N-terminal signal peptide occupies residues 1 to 23 (MRNSRFCAILAVISAISVSYVLA).

The protein resides in the secreted. Secreted protein that is involved in larval elongation, early adult growth and male tail development. This is Protein lon-8 from Caenorhabditis elegans.